The chain runs to 148 residues: Large ribosomal subunit protein bL9 (148 aa).

It belongs to the bacterial ribosomal protein bL9 family.

Binds to the 23S rRNA. The polypeptide is Large ribosomal subunit protein bL9 (Pseudomonas savastanoi pv. phaseolicola (strain 1448A / Race 6) (Pseudomonas syringae pv. phaseolicola (strain 1448A / Race 6))).